The chain runs to 356 residues: Beta-hexosaminidase (356 aa).

Residues Asp-75, Arg-83, Arg-150, and 180–181 (KH) each bind substrate. Catalysis depends on His-193, which acts as the Proton donor/acceptor. Catalysis depends on Asp-264, which acts as the Nucleophile.

Belongs to the glycosyl hydrolase 3 family. NagZ subfamily.

It is found in the cytoplasm. The catalysed reaction is Hydrolysis of terminal non-reducing N-acetyl-D-hexosamine residues in N-acetyl-beta-D-hexosaminides.. The protein operates within cell wall biogenesis; peptidoglycan recycling. Its function is as follows. Plays a role in peptidoglycan recycling by cleaving the terminal beta-1,4-linked N-acetylglucosamine (GlcNAc) from peptide-linked peptidoglycan fragments, giving rise to free GlcNAc, anhydro-N-acetylmuramic acid and anhydro-N-acetylmuramic acid-linked peptides. In Aromatoleum aromaticum (strain DSM 19018 / LMG 30748 / EbN1) (Azoarcus sp. (strain EbN1)), this protein is Beta-hexosaminidase.